Consider the following 266-residue polypeptide: bZIP transcription factor 12 (266 aa).

Positions A184–V248 constitute a bZIP domain. Positions R187 to K205 are basic motif. A coiled-coil region spans residues R202–M244. Residues L212 to L219 are leucine-zipper.

It localises to the nucleus. Functionally, transcription activator that binds to the ABA-responsive elements (ABREs) in vitro. Involved in abiotic stress responses and abscisic acid (ABA) signaling. Involved in the signaling pathway that induces growth inhibition in response to D-allose. The polypeptide is bZIP transcription factor 12 (Oryza sativa subsp. japonica (Rice)).